Here is a 199-residue protein sequence, read N- to C-terminus: Imidazole glycerol phosphate synthase subunit HisH 2 (199 aa).

One can recognise a Glutamine amidotransferase type-1 domain in the interval 1-199 (MIAVIDVSGN…NNFLSLESTC (199 aa)). The active-site Nucleophile is the Cys-76. Active-site residues include His-177 and Glu-179.

Heterodimer of HisH and HisF.

It is found in the cytoplasm. It catalyses the reaction 5-[(5-phospho-1-deoxy-D-ribulos-1-ylimino)methylamino]-1-(5-phospho-beta-D-ribosyl)imidazole-4-carboxamide + L-glutamine = D-erythro-1-(imidazol-4-yl)glycerol 3-phosphate + 5-amino-1-(5-phospho-beta-D-ribosyl)imidazole-4-carboxamide + L-glutamate + H(+). It carries out the reaction L-glutamine + H2O = L-glutamate + NH4(+). It participates in amino-acid biosynthesis; L-histidine biosynthesis; L-histidine from 5-phospho-alpha-D-ribose 1-diphosphate: step 5/9. Its function is as follows. IGPS catalyzes the conversion of PRFAR and glutamine to IGP, AICAR and glutamate. The HisH subunit provides the glutamine amidotransferase activity that produces the ammonia necessary to HisF for the synthesis of IGP and AICAR. The protein is Imidazole glycerol phosphate synthase subunit HisH 2 of Legionella pneumophila subsp. pneumophila (strain Philadelphia 1 / ATCC 33152 / DSM 7513).